A 198-amino-acid polypeptide reads, in one-letter code: Ribonuclease HII (198 aa).

The RNase H type-2 domain occupies 14–198; it reads HMIVGVDEAG…FAPVAQLQLV (185 aa). Residues D20, E21, and D110 each contribute to the a divalent metal cation site.

It belongs to the RNase HII family. It depends on Mn(2+) as a cofactor. The cofactor is Mg(2+).

Its subcellular location is the cytoplasm. It catalyses the reaction Endonucleolytic cleavage to 5'-phosphomonoester.. Functionally, endonuclease that specifically degrades the RNA of RNA-DNA hybrids. The sequence is that of Ribonuclease HII from Sphingopyxis alaskensis (strain DSM 13593 / LMG 18877 / RB2256) (Sphingomonas alaskensis).